Consider the following 454-residue polypeptide: Glutaredoxin domain-containing cysteine-rich protein CG31559 (454 aa).

2 disordered regions span residues 30–88 and 217–239; these read ETAD…QRQK and RSAR…GSDS. Residues 33 to 45 show a composition bias toward polar residues; the sequence is DSGNGSDLESTGL. Positions 58-69 are enriched in low complexity; the sequence is SSLGSDSMHGSS. Positions 70-84 are enriched in polar residues; sequence TEYVRQSASQPSGQR. The segment covering 217–227 has biased composition (basic and acidic residues); that stretch reads RSARSGDEADH. Residues 295 to 400 enclose the Glutaredoxin domain; it reads NAKNFKEKDL…QLLKPYKSMA (106 aa).

This sequence belongs to the GRXCR1 family.

The protein is Glutaredoxin domain-containing cysteine-rich protein CG31559 of Drosophila melanogaster (Fruit fly).